Consider the following 506-residue polypeptide: ATP synthase subunit alpha (506 aa).

170 to 177 provides a ligand contact to ATP; the sequence is GDRQTGKT.

Belongs to the ATPase alpha/beta chains family. F-type ATPases have 2 components, CF(1) - the catalytic core - and CF(0) - the membrane proton channel. CF(1) has five subunits: alpha(3), beta(3), gamma(1), delta(1), epsilon(1). CF(0) has four main subunits: a(1), b(1), b'(1) and c(9-12).

The protein resides in the cellular thylakoid membrane. It catalyses the reaction ATP + H2O + 4 H(+)(in) = ADP + phosphate + 5 H(+)(out). In terms of biological role, produces ATP from ADP in the presence of a proton gradient across the membrane. The alpha chain is a regulatory subunit. The sequence is that of ATP synthase subunit alpha from Synechococcus sp. (strain JA-2-3B'a(2-13)) (Cyanobacteria bacterium Yellowstone B-Prime).